Consider the following 402-residue polypeptide: 1-deoxy-D-xylulose 5-phosphate reductoisomerase (402 aa).

Positions 27, 28, 29, 30, 53, 54, 55, and 140 each coordinate NADPH. Residue Lys141 coordinates 1-deoxy-D-xylulose 5-phosphate. Glu142 is a binding site for NADPH. Residue Asp166 participates in Mn(2+) binding. 1-deoxy-D-xylulose 5-phosphate contacts are provided by Ser167, Glu168, Ser192, and His215. Position 168 (Glu168) interacts with Mn(2+). Position 221 (Gly221) interacts with NADPH. 4 residues coordinate 1-deoxy-D-xylulose 5-phosphate: Ser228, Asn233, Lys234, and Glu237. Glu237 contributes to the Mn(2+) binding site.

This sequence belongs to the DXR family. Mg(2+) serves as cofactor. Mn(2+) is required as a cofactor.

It carries out the reaction 2-C-methyl-D-erythritol 4-phosphate + NADP(+) = 1-deoxy-D-xylulose 5-phosphate + NADPH + H(+). The protein operates within isoprenoid biosynthesis; isopentenyl diphosphate biosynthesis via DXP pathway; isopentenyl diphosphate from 1-deoxy-D-xylulose 5-phosphate: step 1/6. Its function is as follows. Catalyzes the NADPH-dependent rearrangement and reduction of 1-deoxy-D-xylulose-5-phosphate (DXP) to 2-C-methyl-D-erythritol 4-phosphate (MEP). The sequence is that of 1-deoxy-D-xylulose 5-phosphate reductoisomerase from Lawsonia intracellularis (strain PHE/MN1-00).